Consider the following 185-residue polypeptide: Elongation factor P (185 aa).

The protein belongs to the elongation factor P family.

The protein resides in the cytoplasm. It functions in the pathway protein biosynthesis; polypeptide chain elongation. Functionally, involved in peptide bond synthesis. Stimulates efficient translation and peptide-bond synthesis on native or reconstituted 70S ribosomes in vitro. Probably functions indirectly by altering the affinity of the ribosome for aminoacyl-tRNA, thus increasing their reactivity as acceptors for peptidyl transferase. The polypeptide is Elongation factor P (Mesoplasma florum (strain ATCC 33453 / NBRC 100688 / NCTC 11704 / L1) (Acholeplasma florum)).